A 149-amino-acid polypeptide reads, in one-letter code: MKVILLKDVKGLGDKGDVVNASDGYARNFLLPKKVAKEATEGSLQTLKEQKTAQKMKKDQEVDKAKELAERLSKVDVNIKAKAGEGGRLFGSVTSKDVIEKLQKQEGIKLDKRKLLLDEPIRELGSKWIDIKLHSGVVGKIKVTVTEEA.

This sequence belongs to the bacterial ribosomal protein bL9 family.

Its function is as follows. Binds to the 23S rRNA. The sequence is that of Large ribosomal subunit protein bL9 from Alkaliphilus metalliredigens (strain QYMF).